Here is a 162-residue protein sequence, read N- to C-terminus: uncharacterized protein (162 aa).

This sequence belongs to the A.longa ORF167/ORF288 family.

The protein resides in the plastid. This is an uncharacterized protein from Euglena longa (Euglenophycean alga).